The following is an 801-amino-acid chain: Phenylalanine--tRNA ligase beta subunit (801 aa).

The region spanning 39–153 (AEGLSKLVVG…EDAVPGESIF (115 aa)) is the tRNA-binding domain. The region spanning 406–481 (TDDIQVSTSL…RIYGYDKLPT (76 aa)) is the B5 domain. Mg(2+) is bound by residues Asp-459, Asp-465, Glu-468, and Glu-469. Residues 708-801 (TKFPAVSRDI…LTEKVGAEVR (94 aa)) enclose the FDX-ACB domain.

Belongs to the phenylalanyl-tRNA synthetase beta subunit family. Type 1 subfamily. In terms of assembly, tetramer of two alpha and two beta subunits. It depends on Mg(2+) as a cofactor.

The protein localises to the cytoplasm. It catalyses the reaction tRNA(Phe) + L-phenylalanine + ATP = L-phenylalanyl-tRNA(Phe) + AMP + diphosphate + H(+). This is Phenylalanine--tRNA ligase beta subunit from Streptococcus mutans serotype c (strain ATCC 700610 / UA159).